A 333-amino-acid chain; its full sequence is Flap endonuclease 1 (333 aa).

Residues 1–99 form an N-domain region; sequence MGVALRDILA…ETNAERKKLR (99 aa). Mg(2+) is bound by residues Asp-28, Asp-81, Glu-153, Glu-155, Asp-174, Asp-176, and Asp-235. The tract at residues 117–256 is I-domain; it reads EAYRQARSAT…TALKIVKSGG (140 aa). The segment at 325–333 is interaction with PCNA; the sequence is GQKTLESFF.

It belongs to the XPG/RAD2 endonuclease family. FEN1 subfamily. In terms of assembly, interacts with PCNA. PCNA stimulates the nuclease activity without altering cleavage specificity. Mg(2+) serves as cofactor.

In terms of biological role, structure-specific nuclease with 5'-flap endonuclease and 5'-3' exonuclease activities involved in DNA replication and repair. During DNA replication, cleaves the 5'-overhanging flap structure that is generated by displacement synthesis when DNA polymerase encounters the 5'-end of a downstream Okazaki fragment. Binds the unpaired 3'-DNA end and kinks the DNA to facilitate 5' cleavage specificity. Cleaves one nucleotide into the double-stranded DNA from the junction in flap DNA, leaving a nick for ligation. Also involved in the base excision repair (BER) pathway. Acts as a genome stabilization factor that prevents flaps from equilibrating into structures that lead to duplications and deletions. Also possesses 5'-3' exonuclease activity on nicked or gapped double-stranded DNA. This chain is Flap endonuclease 1, found in Methanoregula boonei (strain DSM 21154 / JCM 14090 / 6A8).